The chain runs to 360 residues: Glutamine synthetase (360 aa).

One can recognise a GS beta-grasp domain in the interval 26–105 (IMAEYIWIDA…VLSECWNADG (80 aa)). The region spanning 112-360 (YRHECAKLME…METIYGSVDN (249 aa)) is the GS catalytic domain.

The protein belongs to the glutamine synthetase family. Homooctamer.

It localises to the cytoplasm. It carries out the reaction L-glutamate + NH4(+) + ATP = L-glutamine + ADP + phosphate + H(+). This Colletotrichum gloeosporioides (Anthracnose fungus) protein is Glutamine synthetase (GLN1).